The primary structure comprises 444 residues: Probable D-serine dehydratase (444 aa).

Lysine 118 is subject to N6-(pyridoxal phosphate)lysine.

The protein belongs to the serine/threonine dehydratase family. DsdA subfamily. The cofactor is pyridoxal 5'-phosphate.

It carries out the reaction D-serine = pyruvate + NH4(+). This is Probable D-serine dehydratase from Acinetobacter baumannii (strain ATCC 17978 / DSM 105126 / CIP 53.77 / LMG 1025 / NCDC KC755 / 5377).